A 263-amino-acid chain; its full sequence is Chymotrypsinogen B (263 aa).

A signal peptide spans 1–18 (MAFLWLVSCFALVGATFG). 5 disulfides stabilise this stretch: Cys-19–Cys-140, Cys-60–Cys-76, Cys-154–Cys-219, Cys-186–Cys-200, and Cys-209–Cys-238. In terms of domain architecture, Peptidase S1 spans 34–261 (IVNGEDAIPG…LMPWVQEILE (228 aa)). Residue His-75 is the Charge relay system of the active site. Residue Ser-93 is modified to Phosphoserine. Asp-120 (charge relay system) is an active-site residue. Residue Ser-213 is the Charge relay system of the active site.

This sequence belongs to the peptidase S1 family.

The protein localises to the secreted. Its subcellular location is the extracellular space. The enzyme catalyses Preferential cleavage: Tyr-|-Xaa, Trp-|-Xaa, Phe-|-Xaa, Leu-|-Xaa.. The protein is Chymotrypsinogen B (Ctrb1) of Mus musculus (Mouse).